The chain runs to 542 residues: CTP synthase (542 aa).

The interval 1-266 (MATNYIFVTG…DDFICQRFHL (266 aa)) is amidoligase domain. Position 14 (serine 14) interacts with CTP. Serine 14 is a binding site for UTP. ATP contacts are provided by residues 15-20 (SLGKGI) and aspartate 72. Positions 72 and 140 each coordinate Mg(2+). CTP-binding positions include 147–149 (DIE), 187–192 (KTKPTQ), and lysine 223. Residues 187–192 (KTKPTQ) and lysine 223 contribute to the UTP site. 239-241 (KDV) is a binding site for ATP. The Glutamine amidotransferase type-1 domain occupies 291–542 (VIGMVGKYTE…VKAAKDNQKK (252 aa)). Residue glycine 352 coordinates L-glutamine. Cysteine 379 functions as the Nucleophile; for glutamine hydrolysis in the catalytic mechanism. Residues 380 to 383 (LGMQ), glutamate 403, and arginine 470 each bind L-glutamine. Active-site residues include histidine 515 and glutamate 517.

The protein belongs to the CTP synthase family. In terms of assembly, homotetramer.

It catalyses the reaction UTP + L-glutamine + ATP + H2O = CTP + L-glutamate + ADP + phosphate + 2 H(+). The catalysed reaction is L-glutamine + H2O = L-glutamate + NH4(+). The enzyme catalyses UTP + NH4(+) + ATP = CTP + ADP + phosphate + 2 H(+). The protein operates within pyrimidine metabolism; CTP biosynthesis via de novo pathway; CTP from UDP: step 2/2. Its activity is regulated as follows. Allosterically activated by GTP, when glutamine is the substrate; GTP has no effect on the reaction when ammonia is the substrate. The allosteric effector GTP functions by stabilizing the protein conformation that binds the tetrahedral intermediate(s) formed during glutamine hydrolysis. Inhibited by the product CTP, via allosteric rather than competitive inhibition. Its function is as follows. Catalyzes the ATP-dependent amination of UTP to CTP with either L-glutamine or ammonia as the source of nitrogen. Regulates intracellular CTP levels through interactions with the four ribonucleotide triphosphates. The polypeptide is CTP synthase (Pasteurella multocida (strain Pm70)).